The sequence spans 385 residues: Putative transport protein BpOF4_00890 (385 aa).

Helical transmembrane passes span 42–62, 63–83, 93–113, 191–211, 255–275, 276–296, 304–324, and 350–370; these read TIWIIISILLFLVAAYFILPV, SLPLVAALLTALILTPAVNAL, VAVMLVFTVFVVFIGLSGYYI, SIPGYLVTFLVYLIALFLFML, IIIFIVTLIGLLFIAPEVALL, MAFIIWLIDFVPIIGSIVILA, IVGDVSTGSKLLILAAVLLII, and LGLMLFGVIGFIIGPLLVIAF.

It belongs to the autoinducer-2 exporter (AI-2E) (TC 2.A.86) family.

The protein localises to the cell membrane. In Alkalihalophilus pseudofirmus (strain ATCC BAA-2126 / JCM 17055 / OF4) (Bacillus pseudofirmus), this protein is Putative transport protein BpOF4_00890.